Here is a 338-residue protein sequence, read N- to C-terminus: tRNA N6-adenosine threonylcarbamoyltransferase (338 aa).

2 residues coordinate Fe cation: H111 and H115. Substrate is bound by residues 134–138, D167, G180, and N272; that span reads LVSGG. Fe cation is bound at residue D300.

This sequence belongs to the KAE1 / TsaD family. The cofactor is Fe(2+).

The protein resides in the cytoplasm. It catalyses the reaction L-threonylcarbamoyladenylate + adenosine(37) in tRNA = N(6)-L-threonylcarbamoyladenosine(37) in tRNA + AMP + H(+). Functionally, required for the formation of a threonylcarbamoyl group on adenosine at position 37 (t(6)A37) in tRNAs that read codons beginning with adenine. Is involved in the transfer of the threonylcarbamoyl moiety of threonylcarbamoyl-AMP (TC-AMP) to the N6 group of A37, together with TsaE and TsaB. TsaD likely plays a direct catalytic role in this reaction. This is tRNA N6-adenosine threonylcarbamoyltransferase from Vibrio atlanticus (strain LGP32) (Vibrio splendidus (strain Mel32)).